A 279-amino-acid polypeptide reads, in one-letter code: Replication factor A protein 2 (279 aa).

Positions 26 to 47 are disordered; sequence GAGFNEYDQSSQPSVDRQQGAG. Polar residues predominate over residues 32 to 46; it reads YDQSSQPSVDRQQGA. Positions 80–140 form a DNA-binding region, OB; the sequence is VTFVGVLRNI…GNIKIFSGKI (61 aa).

It belongs to the replication factor A protein 2 family. As to quaternary structure, heterotrimer of 68, 30, and 12 kDa chains. In terms of processing, phosphorylated in a cell cycle-dependent manner. Hypophosphorylated in G1, becomes phosphorylated at the G1/S boundary, it is maintained in this state through the M phase.

It is found in the nucleus. Its function is as follows. Binds to single-stranded sequences. This chain is Replication factor A protein 2 (ssb2), found in Schizosaccharomyces pombe (strain 972 / ATCC 24843) (Fission yeast).